The following is a 417-amino-acid chain: NADH-quinone oxidoreductase subunit D (417 aa).

The protein belongs to the complex I 49 kDa subunit family. As to quaternary structure, NDH-1 is composed of 14 different subunits. Subunits NuoB, C, D, E, F, and G constitute the peripheral sector of the complex.

It is found in the cell inner membrane. The enzyme catalyses a quinone + NADH + 5 H(+)(in) = a quinol + NAD(+) + 4 H(+)(out). Its function is as follows. NDH-1 shuttles electrons from NADH, via FMN and iron-sulfur (Fe-S) centers, to quinones in the respiratory chain. The immediate electron acceptor for the enzyme in this species is believed to be ubiquinone. Couples the redox reaction to proton translocation (for every two electrons transferred, four hydrogen ions are translocated across the cytoplasmic membrane), and thus conserves the redox energy in a proton gradient. This Chromobacterium violaceum (strain ATCC 12472 / DSM 30191 / JCM 1249 / CCUG 213 / NBRC 12614 / NCIMB 9131 / NCTC 9757 / MK) protein is NADH-quinone oxidoreductase subunit D.